Consider the following 286-residue polypeptide: Bifunctional protein FolD (286 aa).

NADP(+)-binding positions include 165–167 (GRS), Ser-190, and Val-231.

The protein belongs to the tetrahydrofolate dehydrogenase/cyclohydrolase family. Homodimer.

It catalyses the reaction (6R)-5,10-methylene-5,6,7,8-tetrahydrofolate + NADP(+) = (6R)-5,10-methenyltetrahydrofolate + NADPH. It carries out the reaction (6R)-5,10-methenyltetrahydrofolate + H2O = (6R)-10-formyltetrahydrofolate + H(+). The protein operates within one-carbon metabolism; tetrahydrofolate interconversion. Functionally, catalyzes the oxidation of 5,10-methylenetetrahydrofolate to 5,10-methenyltetrahydrofolate and then the hydrolysis of 5,10-methenyltetrahydrofolate to 10-formyltetrahydrofolate. This is Bifunctional protein FolD from Bacillus mycoides (strain KBAB4) (Bacillus weihenstephanensis).